We begin with the raw amino-acid sequence, 321 residues long: Lipoyl synthase (321 aa).

The [4Fe-4S] cluster site is built by Cys-68, Cys-73, Cys-79, Cys-94, Cys-98, Cys-101, and Ser-308. The Radical SAM core domain maps to 80 to 297 (FNHGTATFMI…KALADELGFT (218 aa)).

The protein belongs to the radical SAM superfamily. Lipoyl synthase family. The cofactor is [4Fe-4S] cluster.

Its subcellular location is the cytoplasm. It catalyses the reaction [[Fe-S] cluster scaffold protein carrying a second [4Fe-4S](2+) cluster] + N(6)-octanoyl-L-lysyl-[protein] + 2 oxidized [2Fe-2S]-[ferredoxin] + 2 S-adenosyl-L-methionine + 4 H(+) = [[Fe-S] cluster scaffold protein] + N(6)-[(R)-dihydrolipoyl]-L-lysyl-[protein] + 4 Fe(3+) + 2 hydrogen sulfide + 2 5'-deoxyadenosine + 2 L-methionine + 2 reduced [2Fe-2S]-[ferredoxin]. The protein operates within protein modification; protein lipoylation via endogenous pathway; protein N(6)-(lipoyl)lysine from octanoyl-[acyl-carrier-protein]: step 2/2. In terms of biological role, catalyzes the radical-mediated insertion of two sulfur atoms into the C-6 and C-8 positions of the octanoyl moiety bound to the lipoyl domains of lipoate-dependent enzymes, thereby converting the octanoylated domains into lipoylated derivatives. This Shewanella frigidimarina (strain NCIMB 400) protein is Lipoyl synthase.